Reading from the N-terminus, the 349-residue chain is Cyclic AMP-dependent transcription factor ATF-4 (349 aa).

Disordered stretches follow at residues 49–75 (FSSDKAGSSEWPAMDDGLASASDTGKE), 204–271 (PPCV…TAKV), and 279–298 (KLKKMEQNKTAATRYRQKKR). Residue P60 is modified to 4-hydroxyproline. At T212 the chain carries Phosphothreonine. Residues S214, S218, S223, S230, and S234 each carry the phosphoserine modification. The short motif at 214-223 (SDNDSGICMS) is the BetaTrCP degron motif element. Positions 229–239 (GSPQHSPSTSR) are enriched in polar residues. Position 235 is a 4-hydroxyproline (P235). S247 bears the Phosphoserine mark. S251 bears the Phosphoserine; by RPS6KA3 mark. Residues K258 and K270 each participate in a glycyl lysine isopeptide (Lys-Gly) (interchain with G-Cter in SUMO2) cross-link. The bZIP domain occupies 276 to 339 (LDKKLKKMEQ…QYLKDLIEEV (64 aa)). The segment at 278–298 (KKLKKMEQNKTAATRYRQKKR) is basic motif. An interaction with GABBR1 region spans residues 303-339 (ALTGECKELEKKNEALKEKADSLAKEIQYLKDLIEEV). A leucine-zipper region spans residues 304 to 332 (LTGECKELEKKNEALKEKADSLAKEIQYL). K309 bears the N6-acetyllysine mark.

Belongs to the bZIP family. Binds DNA as a homodimer and as a heterodimer. Heterodimer; heterodimerizes with CEBPB. Heterodimer; heterodimerizes with DDIT3/CHOP. Interacts with CEP290 (via an N-terminal region). Interacts with NEK6, DAPK2 (isoform 2) and ZIPK/DAPK3. Interacts (via its leucine zipper domain) with GABBR1 and GABBR2 (via their C-termini). Forms a heterodimer with TXLNG in osteoblasts. Interacts (via its DNA binding domain) with FOXO1 (C-terminal half); the interaction occurs in osteoblasts and regulates glucose homeostasis through suppression of beta-cell proliferation and a decrease in insulin production. Interacts with SATB2; the interaction results in enhanced DNA binding and transactivation by these transcription factors. Interacts with ABRAXAS2. Interacts with TRIB3, inhibiting the transactivation activity of ATF4. Interacts with DISC1; which inhibits ATF4 transcription factor activity by disrupting ATF4 dimerization and DNA-binding. Interacts with EP300/p300; EP300/p300 stabilizes ATF4 and increases its transcriptional activity independently of its catalytic activity by preventing its ubiquitination. Ubiquitinated by SCF(BTRC) in response to mTORC1 signal, followed by proteasomal degradation and leading to down-regulate expression of SIRT4. Interaction with EP300/p300 inhibits ubiquitination by SCF(BTRC). In terms of processing, phosphorylation at Ser-251 by RPS6KA3/RSK2 in osteoblasts enhances transactivation activity and promotes osteoblast differentiation. Phosphorylated on the betaTrCP degron motif at Ser-218, followed by phosphorylation at Thr-212, Ser-223, Ser-230, Ser-234 and Ser-247, promoting interaction with BTRC and ubiquitination. Phosphorylation is promoted by mTORC1. Phosphorylation at Ser-214 by CK2 decreases its stability. Phosphorylated by NEK6. Post-translationally, hydroxylated by PHD3, leading to decreased protein stability. As to expression, ubiquitously expressed in adults.

It localises to the nucleus. The protein localises to the nucleus speckle. Its subcellular location is the cytoplasm. The protein resides in the cell membrane. It is found in the cytoskeleton. It localises to the microtubule organizing center. The protein localises to the centrosome. Its function is as follows. Transcription factor that binds the cAMP response element (CRE) (consensus: 5'-GTGACGT[AC][AG]-3') and displays two biological functions, as regulator of metabolic and redox processes under normal cellular conditions, and as master transcription factor during integrated stress response (ISR). Binds to asymmetric CRE's as a heterodimer and to palindromic CRE's as a homodimer. Core effector of the ISR, which is required for adaptation to various stress such as endoplasmic reticulum (ER) stress, amino acid starvation, mitochondrial stress or oxidative stress. During ISR, ATF4 translation is induced via an alternative ribosome translation re-initiation mechanism in response to EIF2S1/eIF-2-alpha phosphorylation, and stress-induced ATF4 acts as a master transcription factor of stress-responsive genes in order to promote cell recovery. Promotes the transcription of genes linked to amino acid sufficiency and resistance to oxidative stress to protect cells against metabolic consequences of ER oxidation. Activates the transcription of NLRP1, possibly in concert with other factors in response to ER stress. Activates the transcription of asparagine synthetase (ASNS) in response to amino acid deprivation or ER stress. However, when associated with DDIT3/CHOP, the transcriptional activation of the ASNS gene is inhibited in response to amino acid deprivation. Together with DDIT3/CHOP, mediates programmed cell death by promoting the expression of genes involved in cellular amino acid metabolic processes, mRNA translation and the terminal unfolded protein response (terminal UPR), a cellular response that elicits programmed cell death when ER stress is prolonged and unresolved. Activates the expression of COX7A2L/SCAF1 downstream of the EIF2AK3/PERK-mediated unfolded protein response, thereby promoting formation of respiratory chain supercomplexes and increasing mitochondrial oxidative phosphorylation. Together with DDIT3/CHOP, activates the transcription of the IRS-regulator TRIB3 and promotes ER stress-induced neuronal cell death by regulating the expression of BBC3/PUMA in response to ER stress. May cooperate with the UPR transcriptional regulator QRICH1 to regulate ER protein homeostasis which is critical for cell viability in response to ER stress. In the absence of stress, ATF4 translation is at low levels and it is required for normal metabolic processes such as embryonic lens formation, fetal liver hematopoiesis, bone development and synaptic plasticity. Acts as a regulator of osteoblast differentiation in response to phosphorylation by RPS6KA3/RSK2: phosphorylation in osteoblasts enhances transactivation activity and promotes expression of osteoblast-specific genes and post-transcriptionally regulates the synthesis of Type I collagen, the main constituent of the bone matrix. Cooperates with FOXO1 in osteoblasts to regulate glucose homeostasis through suppression of beta-cell production and decrease in insulin production. Activates transcription of SIRT4. Regulates the circadian expression of the core clock component PER2 and the serotonin transporter SLC6A4. Binds in a circadian time-dependent manner to the cAMP response elements (CRE) in the SLC6A4 and PER2 promoters and periodically activates the transcription of these genes. Mainly acts as a transcriptional activator in cellular stress adaptation, but it can also act as a transcriptional repressor: acts as a regulator of synaptic plasticity by repressing transcription, thereby inhibiting induction and maintenance of long-term memory. Regulates synaptic functions via interaction with DISC1 in neurons, which inhibits ATF4 transcription factor activity by disrupting ATF4 dimerization and DNA-binding. This chain is Cyclic AMP-dependent transcription factor ATF-4, found in Mus musculus (Mouse).